The primary structure comprises 513 residues: Activin receptor type-2A (513 aa).

A signal peptide spans 1–19 (MGAAAKLAFAVFLISCSSG). At 20-135 (AILGRSETQE…TSNPVTPKPP (116 aa)) the chain is on the extracellular side. Intrachain disulfides connect Cys-30–Cys-60, Cys-50–Cys-78, Cys-85–Cys-104, Cys-91–Cys-103, and Cys-105–Cys-110. Asn-43 and Asn-66 each carry an N-linked (GlcNAc...) asparagine glycan. The helical transmembrane segment at 136 to 161 (YYNILLYSLVPLMLIAGIVICAFWVY) threads the bilayer. The Cytoplasmic segment spans residues 162-513 (RHHMMAYPPV…VDFPPKESSL (352 aa)). The Protein kinase domain maps to 192-485 (LQLLEVKARG…GERITQMQRL (294 aa)). Residues 198 to 206 (KARGRFGCV) and Lys-219 contribute to the ATP site. Residue Asp-322 is the Proton acceptor of the active site.

Belongs to the protein kinase superfamily. TKL Ser/Thr protein kinase family. TGFB receptor subfamily. As to quaternary structure, part of a complex consisting of MAGI2/ARIP1, ACVR2A, ACVR1B and SMAD3. Interacts with MAGI2/ARIP1. Interacts with type I receptor ACVR1. Interacts with BMP7. Interacts with TSC22D1/TSC-22. Interacts with activin A/INHBA. Mg(2+) serves as cofactor. Mn(2+) is required as a cofactor.

The protein localises to the cell membrane. It catalyses the reaction L-threonyl-[receptor-protein] + ATP = O-phospho-L-threonyl-[receptor-protein] + ADP + H(+). The catalysed reaction is L-seryl-[receptor-protein] + ATP = O-phospho-L-seryl-[receptor-protein] + ADP + H(+). Its function is as follows. On ligand binding, forms a receptor complex consisting of two type II and two type I transmembrane serine/threonine kinases. Type II receptors phosphorylate and activate type I receptors which autophosphorylate, then bind and activate SMAD transcriptional regulators. Receptor for activin A, activin B and inhibin A. Mediates induction of adipogenesis by GDF6. This Rattus norvegicus (Rat) protein is Activin receptor type-2A.